Reading from the N-terminus, the 418-residue chain is Serine hydroxymethyltransferase (418 aa).

(6S)-5,6,7,8-tetrahydrofolate is bound by residues Leu121 and 125–127 (GHL). At Lys230 the chain carries N6-(pyridoxal phosphate)lysine. 356-358 (SPF) is a (6S)-5,6,7,8-tetrahydrofolate binding site.

The protein belongs to the SHMT family. Homodimer. It depends on pyridoxal 5'-phosphate as a cofactor.

It localises to the cytoplasm. It catalyses the reaction (6R)-5,10-methylene-5,6,7,8-tetrahydrofolate + glycine + H2O = (6S)-5,6,7,8-tetrahydrofolate + L-serine. It participates in one-carbon metabolism; tetrahydrofolate interconversion. The protein operates within amino-acid biosynthesis; glycine biosynthesis; glycine from L-serine: step 1/1. Catalyzes the reversible interconversion of serine and glycine with tetrahydrofolate (THF) serving as the one-carbon carrier. This reaction serves as the major source of one-carbon groups required for the biosynthesis of purines, thymidylate, methionine, and other important biomolecules. Also exhibits THF-independent aldolase activity toward beta-hydroxyamino acids, producing glycine and aldehydes, via a retro-aldol mechanism. This chain is Serine hydroxymethyltransferase, found in Pseudoalteromonas atlantica (strain T6c / ATCC BAA-1087).